A 1168-amino-acid polypeptide reads, in one-letter code: Transcription-repair-coupling factor (1168 aa).

A Helicase ATP-binding domain is found at 633 to 794; it reads DMQKSRPMDR…MLGVRDLSVI (162 aa). Position 646-653 (646-653) interacts with ATP; it reads GDVGYGKT. The short motif at 747-750 is the DEEQ box element; sequence DEEQ. Residues 808-969 form the Helicase C-terminal domain; sequence VLEQNMSFIK…GFKIAMRDLN (162 aa).

The protein in the N-terminal section; belongs to the UvrB family. In the C-terminal section; belongs to the helicase family. RecG subfamily.

The protein localises to the cytoplasm. In terms of biological role, couples transcription and DNA repair by recognizing RNA polymerase (RNAP) stalled at DNA lesions. Mediates ATP-dependent release of RNAP and its truncated transcript from the DNA, and recruitment of nucleotide excision repair machinery to the damaged site. This is Transcription-repair-coupling factor from Staphylococcus aureus (strain USA300).